The primary structure comprises 82 residues: MADQEMQKLIKRINELAKKAKEEGLSDLEIIERKDLRQKYLKKFRESFRSQVEMMQIFDKEGKEVTPEKVKEVQRKKGLRDD.

This sequence belongs to the UPF0291 family.

The protein localises to the cytoplasm. This is UPF0291 protein PEPE_0871 from Pediococcus pentosaceus (strain ATCC 25745 / CCUG 21536 / LMG 10740 / 183-1w).